We begin with the raw amino-acid sequence, 666 residues long: Probable potassium transport system protein Kup (666 aa).

The next 12 helical transmembrane spans lie at 16–36, 58–78, 100–120, 141–161, 165–185, 221–241, 253–273, 294–314, 343–363, 373–393, 399–419, and 424–444; these read GFII…LYTM, ISLI…LIAL, PWLI…GALT, IYQN…VLFG, FGTG…FSFL, IFIL…YSDL, WPFV…WILA, VYLV…LISG, LYIP…VLAF, YGLA…YYLI, PILA…FFLA, and FMHG…VMFI.

This sequence belongs to the HAK/KUP transporter (TC 2.A.72) family.

Its subcellular location is the cell membrane. The catalysed reaction is K(+)(in) + H(+)(in) = K(+)(out) + H(+)(out). Its function is as follows. Transport of potassium into the cell. Likely operates as a K(+):H(+) symporter. This chain is Probable potassium transport system protein Kup, found in Streptococcus pyogenes serotype M49 (strain NZ131).